The following is a 415-amino-acid chain: Lipid-A-disaccharide synthase (415 aa).

Residues 1–21 (MNSLPESGSDGQSSADPSQKA) are disordered.

This sequence belongs to the LpxB family.

The enzyme catalyses a lipid X + a UDP-2-N,3-O-bis[(3R)-3-hydroxyacyl]-alpha-D-glucosamine = a lipid A disaccharide + UDP + H(+). It functions in the pathway bacterial outer membrane biogenesis; LPS lipid A biosynthesis. Functionally, condensation of UDP-2,3-diacylglucosamine and 2,3-diacylglucosamine-1-phosphate to form lipid A disaccharide, a precursor of lipid A, a phosphorylated glycolipid that anchors the lipopolysaccharide to the outer membrane of the cell. The chain is Lipid-A-disaccharide synthase from Gluconobacter oxydans (strain 621H) (Gluconobacter suboxydans).